Here is a 367-residue protein sequence, read N- to C-terminus: Outer membrane protein P2 (367 aa).

Residues 1-20 form the signal peptide; the sequence is MKKTLAALIVGAFAASAANA.

This sequence belongs to the Gram-negative porin family. As to quaternary structure, homotrimer.

The protein resides in the cell outer membrane. Functionally, forms pores that allow passive diffusion of small molecules across the outer membrane. The protein is Outer membrane protein P2 (ompP2) of Haemophilus influenzae.